Here is an 82-residue protein sequence, read N- to C-terminus: Small ribosomal subunit protein uS17 (82 aa).

Belongs to the universal ribosomal protein uS17 family. As to quaternary structure, part of the 30S ribosomal subunit.

In terms of biological role, one of the primary rRNA binding proteins, it binds specifically to the 5'-end of 16S ribosomal RNA. This Shewanella pealeana (strain ATCC 700345 / ANG-SQ1) protein is Small ribosomal subunit protein uS17.